The sequence spans 50 residues: Mast cell degranulating peptide (50 aa).

An N-terminal signal peptide occupies residues 1 to 27; that stretch reads MISMLRCTFFFVSVILITSYFVTPTMS. Lys-29 is modified (N6-formyllysine). A disulfide bond links Cys-30 and Cys-42. 2 positions are modified to N6-formyllysine: Lys-44 and Lys-48. The residue at position 49 (Asn-49) is an Asparagine amide.

Expressed by the venom gland.

The protein resides in the secreted. Functionally, potent anti-inflammatory agent. At low concentrations, mediates the degranulation of mast cells thus evoking an inflammatory response. Also acts as a neurotoxin capable of blocking a class of voltage-gated potassium channels. This Apis cerana cerana (Oriental honeybee) protein is Mast cell degranulating peptide.